A 615-amino-acid chain; its full sequence is MATVEVATELGTVVTAVGPKAKDEEEEEEEEESLPPCETVRWAPVGAVAEAGPGAATFSEAAAAEEPGAAPGSPSDATVRTLRRLEAERRQLDSALLALSSHFAQVQFRLRQVVRGAPAEQQRLLRELEDFAFRGCPHVLGYEGLADPCGGDESDVLPGDRPRVRGEDQSEQEKRERLETQREKQKELILQLKTQLDDLETFAYQEGSYDSLPQSVVLERQRVIIDELIKKLDMNLNEDISSLSTEELRQRVDAAVAQIVNPVRVKEQLVEQLKTQIRDLEMFISFIQDEVGSPLQTGGHCECQASGKVGIGSTRVGGSTLPPGPGKAKAEDAKRARETGLHLMRRALAVLQIFTVSQLGCATGQIPQTLWQRSQADRDYSHLLKRLEVSVDRVKQLALRHQPHDHVITSANLQDLSLGGKDELTTVVRKELTVAVRDLLAHGLYASSSGMSLVMAPLACLLPVFSSAPETMHPWELFVKYYHAKNGRAYVESPARKLSQSFALPIMGDTAVTPKQSLLTAIHLVLTEHDPFKRSADSELKALVCMALNEQRLVSWVNLICKSGSLIEPHYQPWSYMAHTGFESALNLLSRLSSLKFSLPVDLAVRQLKNIKDAF.

The interval 15-41 is disordered; that stretch reads TAVGPKAKDEEEEEEEEESLPPCETVR. The segment covering 24-33 has biased composition (acidic residues); it reads EEEEEEEEES. S73 is modified (phosphoserine). 2 coiled-coil regions span residues 76-102 and 163-238; these read DATV…LSSH and RVRG…NLNE. The interval 147-180 is disordered; that stretch reads DPCGGDESDVLPGDRPRVRGEDQSEQEKRERLET. The span at 158-180 shows a compositional bias: basic and acidic residues; the sequence is PGDRPRVRGEDQSEQEKRERLET. In terms of domain architecture, RUN spans 423–604; it reads ELTTVVRKEL…LKFSLPVDLA (182 aa). At S499 the chain carries Phosphoserine.

Functionally, may play a role as p53/TP53 inhibitor and thus may have oncogenic activity. The polypeptide is RUN domain-containing protein 1 (Rundc1) (Mus musculus (Mouse)).